Here is a 103-residue protein sequence, read N- to C-terminus: Large ribosomal subunit protein bL21 (103 aa).

The protein belongs to the bacterial ribosomal protein bL21 family. As to quaternary structure, part of the 50S ribosomal subunit. Contacts protein L20.

In terms of biological role, this protein binds to 23S rRNA in the presence of protein L20. The sequence is that of Large ribosomal subunit protein bL21 from Thiobacillus denitrificans (strain ATCC 25259 / T1).